A 557-amino-acid chain; its full sequence is Dihydroxy-acid dehydratase (557 aa).

Cys-50 provides a ligand contact to [2Fe-2S] cluster. Residue Asp-82 coordinates Mg(2+). Cys-123 lines the [2Fe-2S] cluster pocket. Positions 124 and 125 each coordinate Mg(2+). N6-carboxylysine is present on Lys-125. Cys-195 serves as a coordination point for [2Fe-2S] cluster. Glu-447 lines the Mg(2+) pocket. Ser-473 acts as the Proton acceptor in catalysis.

The protein belongs to the IlvD/Edd family. As to quaternary structure, homodimer. [2Fe-2S] cluster serves as cofactor. Requires Mg(2+) as cofactor.

It carries out the reaction (2R)-2,3-dihydroxy-3-methylbutanoate = 3-methyl-2-oxobutanoate + H2O. It catalyses the reaction (2R,3R)-2,3-dihydroxy-3-methylpentanoate = (S)-3-methyl-2-oxopentanoate + H2O. Its pathway is amino-acid biosynthesis; L-isoleucine biosynthesis; L-isoleucine from 2-oxobutanoate: step 3/4. It functions in the pathway amino-acid biosynthesis; L-valine biosynthesis; L-valine from pyruvate: step 3/4. Functions in the biosynthesis of branched-chain amino acids. Catalyzes the dehydration of (2R,3R)-2,3-dihydroxy-3-methylpentanoate (2,3-dihydroxy-3-methylvalerate) into 2-oxo-3-methylpentanoate (2-oxo-3-methylvalerate) and of (2R)-2,3-dihydroxy-3-methylbutanoate (2,3-dihydroxyisovalerate) into 2-oxo-3-methylbutanoate (2-oxoisovalerate), the penultimate precursor to L-isoleucine and L-valine, respectively. The polypeptide is Dihydroxy-acid dehydratase (Nitrosomonas eutropha (strain DSM 101675 / C91 / Nm57)).